A 411-amino-acid chain; its full sequence is Bifunctional protein GlmU (411 aa).

The pyrophosphorylase stretch occupies residues 1 to 204 (MDAIILCAGK…IGKLHGVELN (204 aa)). UTP is bound by residues 6-9 (LCAG), Gln-74, and Gly-79. Residues Thr-80, Gly-130, Asn-142, and Asn-158 each contribute to the N-acetyl-alpha-D-glucosamine 1-phosphate site. The tract at residues 205–224 (GYWNDIGHPWDVLSANSHFL) is linker. Residues 225–411 (NKIISKISGK…DELVITKKRN (187 aa)) are N-acetyltransferase. His-308 acts as the Proton acceptor in catalysis. Residues Ala-384 and Lys-401 each contribute to the acetyl-CoA site.

It in the N-terminal section; belongs to the N-acetylglucosamine-1-phosphate uridyltransferase family. The protein in the C-terminal section; belongs to the transferase hexapeptide repeat family.

The catalysed reaction is N-acetyl-alpha-D-glucosamine 1-phosphate + UTP + H(+) = UDP-N-acetyl-alpha-D-glucosamine + diphosphate. It catalyses the reaction alpha-D-glucosamine 1-phosphate + acetyl-CoA = N-acetyl-alpha-D-glucosamine 1-phosphate + CoA + H(+). It participates in nucleotide-sugar biosynthesis; UDP-N-acetyl-alpha-D-glucosamine biosynthesis; N-acetyl-alpha-D-glucosamine 1-phosphate from alpha-D-glucosamine 6-phosphate (route II): step 2/2. It functions in the pathway nucleotide-sugar biosynthesis; UDP-N-acetyl-alpha-D-glucosamine biosynthesis; UDP-N-acetyl-alpha-D-glucosamine from N-acetyl-alpha-D-glucosamine 1-phosphate: step 1/1. Functionally, catalyzes the last two sequential reactions in the de novo biosynthetic pathway for UDP-N-acetyl-glucosamine (UDP-GlcNAc). Responsible for the acetylation of GlcN-1-P to GlcNAc-1-P, and for the uridyl transfer from UTP to GlcNAc-1-P, to produce UDP-GlcNAc and pyrophosphate. This Methanococcus maripaludis (strain C5 / ATCC BAA-1333) protein is Bifunctional protein GlmU.